The sequence spans 629 residues: MSPVSVISLPSDLCLPTSFIDRSGRELIPLHITIPNVAMRRQGKLMTRASMSMNLRTAVSDDAVIRRRGDFHSNLWDDDLIQSLSSPYGEPSYRERAERLIGEVKNSFNSMSNEDGESITPLDDLIQRLWMVDSVERLGIDRHFKKEIKSALDHVYRYWSEKGIGCGRESVVTDLNSTALGLRTLRLHGYDVSADVLNHFKNQSGQFACTLKQTEDQIRTVLNLYRASLIAFPGEKVMDEAESFSAKYLKEALQKIPVSSFSREIGDVLEYGWHTYLPRLEARNYIDVFGQDTENSKSYMKTEKLLELAKLEFNIFHALQKRELEYLVRWWKGSGSPQMTFCRHRHVEYYTLASCIAFEPQHSGFRLGFAKACHIITVLDDMYDTFGTLDELELFTSAIKRWDPSATECLPEYMKGVYMIVYNTVNEMSQEADKAQGRDTLNYCRQAWEEYIDAYMQEAKWIASGEVPTFEEYYENGKVSSGHRVSALQPILTTDIPFPEHVLKEVDIPSQLNDLASAILRLRGDTRCYQADRARGEEASCISCYMKDNPGTTEEDALNHLNAMISDVIKGLNWELLKPNSSVPISAKKHAFDISRAFHCGYKYRDGYSVANIETKSLVKRTVIDPVTL.

A chloroplast-targeting transit peptide spans 1 to 48 (MSPVSVISLPSDLCLPTSFIDRSGRELIPLHITIPNVAMRRQGKLMTR). Mg(2+) contacts are provided by Asp-380, Asp-384, and Asp-532. Positions 380-384 (DDMYD) match the DDXXD motif motif. Ser-540 lines the K(+) pocket.

It belongs to the terpene synthase family. Tpsd subfamily. It depends on Mg(2+) as a cofactor. Requires Mn(2+) as cofactor. K(+) is required as a cofactor.

Its subcellular location is the plastid. The protein resides in the chloroplast. It carries out the reaction (2E)-geranyl diphosphate = (1S,5S)-alpha-pinene + diphosphate. Its pathway is terpene metabolism; oleoresin biosynthesis. Functionally, involved in defensive oleoresin formation in conifers in response to insect attack or other injury. Involved in monoterpene (C10) olefins biosynthesis. Produces mainly (-)-alpha-pinene (79%) and lesser amounts of (-)-beta-pinene (4.2%), nearly racemic mixtures of camphene (2.8% (+)/2.2% (-)) and limonene (2.4% (+)/3.7% (-)), as well as small amounts of (+)-alpha-pinene (3.3%) and (+)-beta-pinene (2.4%). The sequence is that of (-)-alpha-pinene synthase, chloroplastic (PT1) from Pinus taeda (Loblolly pine).